The sequence spans 61 residues: U-stichotoxin-Hcr1b (61 aa).

The signal sequence occupies residues 1-19 (PILIFAFVMFAVMVNAKPS). The propeptide occupies 20 to 31 (IDDAEMKREPKP). Cystine bridges form between C38-C49 and C41-C56.

The protein belongs to the Hau1a/HC18/HC19 family.

The protein localises to the secreted. It localises to the nematocyst. Toxin that is lethal to crab. Does not produce the typical symptoms associated with sodium channel toxins in crabs, suggesting that it likely does not act on sodium channels. The protein is U-stichotoxin-Hcr1b of Radianthus crispa (Leathery sea anemone).